We begin with the raw amino-acid sequence, 203 residues long: Glycerol-3-phosphate acyltransferase (203 aa).

The next 5 helical transmembrane spans lie at L2–V22, C54–L74, A80–F100, L114–I134, and T153–F173.

It belongs to the PlsY family. Probably interacts with PlsX.

The protein resides in the cell inner membrane. The catalysed reaction is an acyl phosphate + sn-glycerol 3-phosphate = a 1-acyl-sn-glycero-3-phosphate + phosphate. It participates in lipid metabolism; phospholipid metabolism. Catalyzes the transfer of an acyl group from acyl-phosphate (acyl-PO(4)) to glycerol-3-phosphate (G3P) to form lysophosphatidic acid (LPA). This enzyme utilizes acyl-phosphate as fatty acyl donor, but not acyl-CoA or acyl-ACP. This Pseudoalteromonas translucida (strain TAC 125) protein is Glycerol-3-phosphate acyltransferase.